A 359-amino-acid polypeptide reads, in one-letter code: Peptide chain release factor 1 (359 aa).

N5-methylglutamine is present on glutamine 236.

It belongs to the prokaryotic/mitochondrial release factor family. Methylated by PrmC. Methylation increases the termination efficiency of RF1.

The protein localises to the cytoplasm. Functionally, peptide chain release factor 1 directs the termination of translation in response to the peptide chain termination codons UAG and UAA. This Streptococcus pyogenes serotype M3 (strain ATCC BAA-595 / MGAS315) protein is Peptide chain release factor 1.